Consider the following 460-residue polypeptide: UDP-N-acetylmuramate--L-alanine ligase (460 aa).

ATP is bound at residue 118–124 (GAHGKTT).

The protein belongs to the MurCDEF family.

The protein localises to the cytoplasm. The catalysed reaction is UDP-N-acetyl-alpha-D-muramate + L-alanine + ATP = UDP-N-acetyl-alpha-D-muramoyl-L-alanine + ADP + phosphate + H(+). It functions in the pathway cell wall biogenesis; peptidoglycan biosynthesis. Its function is as follows. Cell wall formation. This is UDP-N-acetylmuramate--L-alanine ligase from Clostridium botulinum (strain Alaska E43 / Type E3).